The primary structure comprises 271 residues: Neurexophilin-1 (271 aa).

An N-terminal signal peptide occupies residues 1–21 (MQAACWYVLFLLQPTVYLVTC). The II stretch occupies residues 22–97 (ANLTNGGKSE…WDWLRNSTDL (76 aa)). 6 N-linked (GlcNAc...) asparagine glycosylation sites follow: N23, N68, N93, N146, N156, and N162. An III region spans residues 98–176 (QEPRPRAKRR…LVPPTKIVEF (79 aa)). The segment at 177-185 (DLAQQTVID) is IV (linker domain). Residues 186–271 (AKDSKSFNCR…HSDTPYFPSG (86 aa)) are v (Cys-rich).

This sequence belongs to the neurexophilin family.

Its subcellular location is the secreted. May be signaling molecules that resemble neuropeptides and that act by binding to alpha-neurexins and possibly other receptors. The polypeptide is Neurexophilin-1 (NXPH1) (Homo sapiens (Human)).